We begin with the raw amino-acid sequence, 427 residues long: Gamma-glutamyl phosphate reductase (427 aa).

It belongs to the gamma-glutamyl phosphate reductase family.

Its subcellular location is the cytoplasm. The catalysed reaction is L-glutamate 5-semialdehyde + phosphate + NADP(+) = L-glutamyl 5-phosphate + NADPH + H(+). It participates in amino-acid biosynthesis; L-proline biosynthesis; L-glutamate 5-semialdehyde from L-glutamate: step 2/2. In terms of biological role, catalyzes the NADPH-dependent reduction of L-glutamate 5-phosphate into L-glutamate 5-semialdehyde and phosphate. The product spontaneously undergoes cyclization to form 1-pyrroline-5-carboxylate. The polypeptide is Gamma-glutamyl phosphate reductase (Rhizobium meliloti (strain 1021) (Ensifer meliloti)).